Reading from the N-terminus, the 98-residue chain is Putative membrane protein insertion efficiency factor (98 aa).

It belongs to the UPF0161 family.

It localises to the cell inner membrane. Its function is as follows. Could be involved in insertion of integral membrane proteins into the membrane. The chain is Putative membrane protein insertion efficiency factor from Cupriavidus pinatubonensis (strain JMP 134 / LMG 1197) (Cupriavidus necator (strain JMP 134)).